The chain runs to 755 residues: Catalase-peroxidase (755 aa).

The tryptophyl-tyrosyl-methioninium (Trp-Tyr) (with M-267) cross-link spans 93–241 (WHSAGTYRVF…LAAAHMGLIY (149 aa)). H94 (proton acceptor) is an active-site residue. Residues 241-267 (YVNPEGPDGNPDPVAAARDIRVTFGRM) constitute a cross-link (tryptophyl-tyrosyl-methioninium (Tyr-Met) (with W-93)). Residue H282 participates in heme b binding.

Belongs to the peroxidase family. Peroxidase/catalase subfamily. In terms of assembly, homodimer or homotetramer. Heme b is required as a cofactor. In terms of processing, formation of the three residue Trp-Tyr-Met cross-link is important for the catalase, but not the peroxidase activity of the enzyme.

The protein resides in the cytoplasm. It catalyses the reaction H2O2 + AH2 = A + 2 H2O. It carries out the reaction 2 H2O2 = O2 + 2 H2O. Bifunctional enzyme with both catalase and broad-spectrum peroxidase activity. The polypeptide is Catalase-peroxidase (Podospora anserina (strain S / ATCC MYA-4624 / DSM 980 / FGSC 10383) (Pleurage anserina)).